Here is a 459-residue protein sequence, read N- to C-terminus: Argininosuccinate lyase (459 aa).

The protein belongs to the lyase 1 family. Argininosuccinate lyase subfamily.

It localises to the cytoplasm. It catalyses the reaction 2-(N(omega)-L-arginino)succinate = fumarate + L-arginine. Its pathway is amino-acid biosynthesis; L-arginine biosynthesis; L-arginine from L-ornithine and carbamoyl phosphate: step 3/3. This is Argininosuccinate lyase from Geobacillus thermodenitrificans (strain NG80-2).